The sequence spans 619 residues: ESX-2 secretion system protein EccA2 (619 aa).

373–380 contacts ATP; it reads GPPGTGKT.

Belongs to the CbxX/CfxQ family. In terms of assembly, part of the ESX-2 / type VII secretion system (T7SS), which is composed of cytosolic and membrane components.

It is found in the cytoplasm. Functionally, part of an ESX-2 / type VII specialized secretion system (T7SS), which exports several proteins. May have ATPase activity and might provide energy for the export of ESX-2 substrates. The polypeptide is ESX-2 secretion system protein EccA2 (Mycobacterium bovis (strain ATCC BAA-935 / AF2122/97)).